A 393-amino-acid chain; its full sequence is S-adenosylmethionine synthase 1 (393 aa).

Glutamate 9 provides a ligand contact to Mg(2+). Residue histidine 15 participates in ATP binding. Glutamate 43 lines the K(+) pocket. Residues glutamate 56 and glutamine 99 each coordinate L-methionine. Residues 167 to 169 (DGK), 235 to 238 (SGRF), aspartate 246, 252 to 253 (RK), alanine 269, lysine 273, and lysine 277 each bind ATP. Residue aspartate 246 participates in L-methionine binding. Lysine 277 is an L-methionine binding site.

Belongs to the AdoMet synthase family. In terms of assembly, homotetramer. Requires Mn(2+) as cofactor. Mg(2+) serves as cofactor. It depends on Co(2+) as a cofactor. K(+) is required as a cofactor.

The protein localises to the cytoplasm. It carries out the reaction L-methionine + ATP + H2O = S-adenosyl-L-methionine + phosphate + diphosphate. The protein operates within amino-acid biosynthesis; S-adenosyl-L-methionine biosynthesis; S-adenosyl-L-methionine from L-methionine: step 1/1. Its function is as follows. Catalyzes the formation of S-adenosylmethionine from methionine and ATP. The reaction comprises two steps that are both catalyzed by the same enzyme: formation of S-adenosylmethionine (AdoMet) and triphosphate, and subsequent hydrolysis of the triphosphate. This chain is S-adenosylmethionine synthase 1 (METK1), found in Solanum tuberosum (Potato).